The chain runs to 959 residues: Lon protease homolog, mitochondrial (959 aa).

The transit peptide at 1 to 67 directs the protein to the mitochondrion; the sequence is MAASTGYVRL…GPAIGGQWRG (67 aa). 2 disordered regions span residues 77-102 and 218-257; these read GAFS…GSAG and RQLE…HPAE. The segment covering 91 to 102 has biased composition (gly residues); sequence EEGAGGAGGSAG. In terms of domain architecture, Lon N-terminal spans 124–370; sequence LPLIAITRNP…KALSLLKKEF (247 aa). A compositionally biased stretch (basic residues) spans 233 to 243; it reads HKPRRKSKRGK. Basic and acidic residues predominate over residues 244 to 256; sequence KEAEDELSARHPA. ATP is bound at residue 523-530; that stretch reads GPPGVGKT. In terms of domain architecture, Lon proteolytic spans 759 to 949; it reads VTPPGVVMGL…REIFDIAFPD (191 aa). Catalysis depends on residues Ser855 and Lys898.

This sequence belongs to the peptidase S16 family. In terms of assembly, homohexamer. Organized in a ring with a central cavity. The ATP-binding and proteolytic domains (AP-domain) form a hexameric chamber, while the N-terminal domain is arranged as a trimer of dimers. DNA and RNA binding is stimulated by substrate and inhibited by ATP binding. Interacts with TWNK and mitochondrial DNA polymerase subunit POLG. As to expression, duodenum, heart, lung and liver, but not thymus.

The protein localises to the mitochondrion matrix. It carries out the reaction Hydrolysis of proteins in presence of ATP.. Peptidase activity is subject to substrate inhibition by ATP. ATP-dependent serine protease that mediates the selective degradation of misfolded, unassembled or oxidatively damaged polypeptides as well as certain short-lived regulatory proteins in the mitochondrial matrix. Endogenous substrates include mitochondrial steroidogenic acute regulatory (StAR) protein, DELE1, helicase Twinkle (TWNK) and the large ribosomal subunit protein MRPL32/bL32m. MRPL32/bL32m is protected from degradation by LONP1 when it is bound to a nucleic acid (RNA), but TWNK is not. May also have a chaperone function in the assembly of inner membrane protein complexes. Participates in the regulation of mitochondrial gene expression and in the maintenance of the integrity of the mitochondrial genome. Binds to mitochondrial promoters and RNA in a single-stranded, site-specific, and strand-specific manner. May regulate mitochondrial DNA replication and/or gene expression using site-specific, single-stranded DNA binding to target the degradation of regulatory proteins binding to adjacent sites in mitochondrial promoters. This is Lon protease homolog, mitochondrial from Homo sapiens (Human).